Here is a 257-residue protein sequence, read N- to C-terminus: Ras-related protein Rab-26 (257 aa).

Positions 1–53 (MSRKKTPKSKGGSVPAASTLPAAANGPRLAHPRTARPGPEAPPNGPPQSGRPS) are disordered. Residues Ser73, Gly74, Val75, Gly76, Lys77, Thr78, Cys79, Ser96, and Thr97 each contribute to the GTP site. Thr78 contacts Mg(2+). Short sequence motifs (switch) lie at residues 87 to 102 (GAFL…GIDF) and 120 to 137 (DTAG…YYRD). Residues Thr97 and Asp120 each coordinate Mg(2+). Gly123, Asn178, Lys179, Asp181, Ala209, and Lys210 together coordinate GTP. Residues Cys254 and Cys255 are each lipidated (S-geranylgeranyl cysteine).

Belongs to the small GTPase superfamily. Rab family. In terms of assembly, interacts with ADRA2B. Interacts with RIMS1. Mg(2+) is required as a cofactor. Expressed in pancreas, kidney, brain, submandibular gland, and lung.

It localises to the cytoplasmic vesicle. It is found in the secretory vesicle membrane. The protein localises to the golgi apparatus membrane. The enzyme catalyses GTP + H2O = GDP + phosphate + H(+). Regulated by guanine nucleotide exchange factors (GEFs) which promote the exchange of bound GDP for free GTP. Regulated by GTPase activating proteins (GAPs) which increase the GTP hydrolysis activity. Inhibited by GDP dissociation inhibitors (GDIs). Functionally, the small GTPases Rab are key regulators of intracellular membrane trafficking, from the formation of transport vesicles to their fusion with membranes. Rabs cycle between an inactive GDP-bound form and an active GTP-bound form that is able to recruit to membranes different set of downstream effectors directly responsible for vesicle formation, movement, tethering and fusion. RAB26 mediates transport of ADRA2A and ADRA2B from the Golgi to the cell membrane. Plays a role in the maturation of zymogenic granules and in pepsinogen secretion in the stomach. Plays a role in the secretion of amylase from acinar granules in the parotid gland. In Rattus norvegicus (Rat), this protein is Ras-related protein Rab-26.